The following is a 959-amino-acid chain: Nucleoporin NUP100/NSP100 (959 aa).

Residues 1 to 104 (MFGNNRPMFG…NSSNASNGNT (104 aa)) form a disordered region. 3 FG repeats span residues 2-3 (FG), 9-10 (FG), and glycine 17. The segment covering 12 to 36 (SNLSFGSNTSSFGGQQSQQPNSLFG) has biased composition (polar residues). An SLFG 1; approximate repeat occupies 21–24 (SSFG). One copy of the SLFG 2 repeat lies at 33-36 (SLFG). Residues 37–48 (NSNNNNNSTSNN) are compositionally biased toward low complexity. An SLFG 3; approximate repeat occupies 51 to 54 (SGFG). 2 stretches are compositionally biased toward low complexity: residues 56 to 81 (FTSA…AFGQ) and 92 to 104 (GSLN…NGNT). Residues 66 to 69 (SLFG) form an SLFG 4 repeat. The stretch at 77–80 (GAFG) is one GLFG 1; approximate repeat. Residues 89 to 92 (SPFG) form an SLFG 5; approximate repeat. Residues 105–106 (FG) form an FG 4 repeat. The GLFG 2; approximate repeat unit spans residues 112–115 (GSFG). Residues 121 to 136 (AFNNNSNSTNSPFGFN) are compositionally biased toward low complexity. The tract at residues 121–172 (AFNNNSNSTNSPFGFNKPNTGGTLFGSQNNNSAGTSSLFGGQSTSTTGTFGN) is disordered. Residues 131 to 134 (SPFG) form an SLFG 6; approximate repeat. Over residues 137 to 153 (KPNTGGTLFGSQNNNSA) the composition is skewed to polar residues. The FG 5 repeat unit spans residues 145 to 146 (FG). A compositionally biased stretch (low complexity) spans 154–172 (GTSSLFGGQSTSTTGTFGN). One copy of the SLFG 7 repeat lies at 157–160 (SLFG). The GLFG 3; approximate repeat unit spans residues 168-171 (GTFG). One copy of the SLFG 8; approximate repeat lies at 175 to 178 (SSFG). The stretch at 189-190 (FG) is one FG 6 repeat. The disordered stretch occupies residues 190–394 (GAGNNSQSNT…NNQQQQSTGL (205 aa)). A compositionally biased stretch (polar residues) spans 192-245 (GNNSQSNTTGSLFGNQQSSAFGTNNQQGSLFGQQSQNTNNAFGNQNQLGGSSFG). Residues 202 to 205 (SLFG) form an SLFG 9 repeat. One copy of the SLFG 10; approximate repeat lies at 210–213 (SAFG). The SLFG 11 repeat unit spans residues 220–223 (SLFG). The FG 7 repeat unit spans residues 233–234 (FG). Residues 242-245 (SSFG) form an SLFG 12; approximate repeat. An SLFG 13 repeat occupies 253 to 256 (SLFG). The segment covering 259–293 (NNTLGNTTNNRNGLFGQMNSSNQGSSNSGLFGQNS) has biased composition (low complexity). GLFG repeat units follow at residues 271–274 (GLFG) and 287–290 (GLFG). Over residues 294-303 (MNSSTQGVFG) the composition is skewed to polar residues. The GLFG 6; approximate repeat unit spans residues 300 to 303 (GVFG). Residues 304-317 (QNNNQMQINGNNNN) show a composition bias toward low complexity. One copy of the SLFG 14 repeat lies at 318-321 (SLFG). GLFG repeat units lie at residues 333 to 336 (GLFG), 345 to 348 (GLFG), 358 to 361 (GLFG), 379 to 382 (GLFG), and 393 to 396 (GLFG). The segment covering 336–352 (GQNNQQQGSGLFGQNSQ) has biased composition (low complexity). Residues 353–377 (TSGSSGLFGQNNQKQPNTFTQSNTG) show a composition bias toward polar residues. SLFG repeat units follow at residues 405-408 (SLFG), 417-420 (SLFG), and 436-439 (SLFG). An FG 8 repeat occupies 448–449 (FG). An SLFG 18 repeat occupies 462 to 465 (SLFG). One copy of the SLFG 19; approximate repeat lies at 474–477 (SLFG). 3 GLFG repeats span residues 490–493 (GLFG), 506–509 (GLFG), and 523–526 (GLFG). The FG 9 repeat unit spans residues 542–543 (FG). The GLFG 15 repeat unit spans residues 550–553 (GLFG). One copy of the FG 10 repeat lies at 569–570 (FG). Disordered stretches follow at residues 672-697 (TLER…LNSN) and 745-794 (DDQA…PMIE). Residues 679-697 (GSSTSNSITDPESSYLNSN) show a composition bias toward polar residues. Positions 757 to 775 (LTEKAHSPQTDLKDDHDES) are enriched in basic and acidic residues. 2 positions are modified to phosphoserine: serine 763 and serine 783. Over residues 777-790 (PDPQSKSPNGSTSI) the composition is skewed to polar residues. The region spanning 814 to 956 (KNNYYISPSI…GTYSYTIDHP (143 aa)) is the Peptidase S59 domain. Residues 816–955 (NYYISPSIET…TGTYSYTIDH (140 aa)) are nucleoporin RNA-binding motif (NRM).

It belongs to the nucleoporin GLFG family. As to quaternary structure, component of the nuclear pore complex (NPC). NPC constitutes the exclusive means of nucleocytoplasmic transport. NPCs allow the passive diffusion of ions and small molecules and the active, nuclear transport receptor-mediated bidirectional transport of macromolecules such as proteins, RNAs, ribonucleoparticles (RNPs), and ribosomal subunits across the nuclear envelope. Due to its 8-fold rotational symmetry, all subunits are present with 8 copies or multiples thereof. Through its FG repeats NUP100 interacts with numerous karyopherins including KAP95, and MEX67.

The protein resides in the nucleus. The protein localises to the nuclear pore complex. It is found in the nucleus membrane. Functionally, functions as a component of the nuclear pore complex (NPC). NPC components, collectively referred to as nucleoporins (NUPs), can play the role of both NPC structural components and of docking or interaction partners for transiently associated nuclear transport factors. Active directional transport is assured by both, a Phe-Gly (FG) repeat affinity gradient for these transport factors across the NPC and a transport cofactor concentration gradient across the nuclear envelope (GSP1 and GSP2 GTPases associated predominantly with GTP in the nucleus, with GDP in the cytoplasm). NUP100 plays an important role in several nuclear export and import pathways including poly(A)+ RNA and protein transport. The chain is Nucleoporin NUP100/NSP100 (NUP100) from Saccharomyces cerevisiae (strain ATCC 204508 / S288c) (Baker's yeast).